The chain runs to 109 residues: C-X-C motif chemokine 13 (109 aa).

The signal sequence occupies residues 1-22 (MKFISTSLLLMLLVSSLSPVQG). Cystine bridges form between Cys-33-Cys-60 and Cys-35-Cys-76.

Belongs to the intercrine alpha (chemokine CxC) family. As to expression, highest levels in liver, followed by spleen, lymph node, appendix and stomach. Low levels in salivary gland, mammary gland and fetal spleen.

It localises to the secreted. Chemotactic for B-lymphocytes but not for T-lymphocytes, monocytes and neutrophils. Does not induce calcium release in B-lymphocytes. Binds to BLR1/CXCR5. This Homo sapiens (Human) protein is C-X-C motif chemokine 13 (CXCL13).